A 63-amino-acid polypeptide reads, in one-letter code: 2-hydroxymuconate tautomerase (63 aa).

Pro2 functions as the Proton acceptor; via imino nitrogen in the catalytic mechanism.

The protein belongs to the 4-oxalocrotonate tautomerase family. In terms of assembly, homohexamer.

The catalysed reaction is (2Z,4E)-2-hydroxyhexa-2,4-dienedioate = (3E)-2-oxohex-3-enedioate. Its pathway is aromatic compound metabolism; salicylate degradation. In terms of biological role, catalyzes the ketonization of 2-hydroxymuconate stereoselectively to yield 2-oxo-3-hexenedioate. The chain is 2-hydroxymuconate tautomerase (nahJ) from Pseudomonas putida (Arthrobacter siderocapsulatus).